Reading from the N-terminus, the 229-residue chain is Large ribosomal subunit protein uL1 (229 aa).

The protein belongs to the universal ribosomal protein uL1 family. In terms of assembly, part of the 50S ribosomal subunit.

Binds directly to 23S rRNA. The L1 stalk is quite mobile in the ribosome, and is involved in E site tRNA release. Functionally, protein L1 is also a translational repressor protein, it controls the translation of the L11 operon by binding to its mRNA. This Rhodopseudomonas palustris (strain HaA2) protein is Large ribosomal subunit protein uL1.